The chain runs to 195 residues: MGSRASTLLRDEELEEIKKETGFSHSQITRLYSRFTSLDKGENGTLSREDFQRIPELAINPLGDRIINAFFSEGEDQVNFRGFMRTLAHFRPIEDNEKSKDVNGPEPLNSRSNKLHFAFRLYDLDKDDKISRDELLQVLRMMVGVNISDEQLGSIADRTIQEADQDGDSAISFTEFVKVLEKVDVEQKMSIRFLH.

G2 carries the N-myristoyl glycine lipid modification. Positions 2–6 (GSRAS) match the Necessary for association with microtubule and interaction with GAPDH motif. 4 EF-hand domains span residues 26-61 (SQIT…AINP), 71-106 (FSEG…NGPE), 110-145 (SRSN…MVGV), and 151-186 (QLGS…VDVE). Ca(2+)-binding residues include D123, D125, D127, K129, and E134. A Nuclear export signal 1 motif is present at residues 138-147 (VLRMMVGVNI). 4 residues coordinate Ca(2+): D164, D166, D168, and E175. A Nuclear export signal 2 motif is present at residues 176–185 (FVKVLEKVDV).

It belongs to the calcineurin regulatory subunit family. CHP subfamily. Monomer. Interacts with STK17B; the interaction occurs in a calcium-independent manner and induces the translocation of CHP1 from the Golgi to the nucleus. Interacts with GAPDH; the interaction is direct, occurs in a N-myristoylation-dependent manner and facilitates the ability of CHP1 to bind microtubules. Interacts with KIF1B (via the C-terminal end of the kinesin-motor domain); the interaction occurs in a calcium-dependent manner. Associates (via C-terminal domain) with microtubules; the association occurs with polymerized microtubules during the cell cycle in a myristoylation- and calcium-independent manner and is enhanced by GAPDH. Interacts with PPP3CA. Interacts with SLC9A1/NHE1 (via the cytoplasmic C-terminal domain); the interaction occurs at the plasma membrane in a calcium-dependent manner and at a domain that is critical for growth factor stimulation of the exchanger. Interacts with SLC9A3; increases SLC9A3 trafficking and activity at the plasma membrane. Post-translationally, phosphorylated; decreased phosphorylation is associated with an increase in SLC9A1/NHE1 Na(+)/H(+) exchange activity. Phosphorylation occurs in serum-dependent manner. The phosphorylation state may regulate the binding to SLC9A1/NHE1. In terms of processing, both N-myristoylation and calcium-mediated conformational changes are essential for its function in exocytic traffic. N-myristoylation is required for its association with microtubules and interaction with GAPDH, but not for the constitutive association to membranes.

Its subcellular location is the nucleus. It localises to the cytoplasm. It is found in the cytoskeleton. The protein resides in the endomembrane system. The protein localises to the endoplasmic reticulum-Golgi intermediate compartment. Its subcellular location is the endoplasmic reticulum. It localises to the cell membrane. It is found in the membrane. In terms of biological role, calcium-binding protein involved in different processes such as regulation of vesicular trafficking, plasma membrane Na(+)/H(+) exchanger and gene transcription. Involved in the constitutive exocytic membrane traffic. Mediates the association between microtubules and membrane-bound organelles of the endoplasmic reticulum and Golgi apparatus and is also required for the targeting and fusion of transcytotic vesicles (TCV) with the plasma membrane. Functions as an integral cofactor in cell pH regulation by controlling plasma membrane-type Na(+)/H(+) exchange activity. Affects the pH sensitivity of SLC9A1/NHE1 by increasing its sensitivity at acidic pH. Required for the stabilization and localization of SLC9A1/NHE1 at the plasma membranes. Inhibits serum- and GTPase-stimulated Na(+)/H(+) exchange. Plays a role as an inhibitor of ribosomal RNA transcription by repressing the nucleolar UBF1 transcriptional activity. May sequester UBF1 in the nucleoplasm and limit its translocation to the nucleolus. Associates to the ribosomal gene promoter. Acts as a negative regulator of the calcineurin/NFAT signaling pathway. Inhibits NFAT nuclear translocation and transcriptional activity by suppressing the calcium-dependent calcineurin phosphatase activity. Also negatively regulates the kinase activity of the apoptosis-induced kinase STK17B. Inhibits both STK17B auto- and substrate-phosphorylations in a calcium-dependent manner. The protein is Calcineurin B homologous protein 1 (Chp1) of Mus musculus (Mouse).